Reading from the N-terminus, the 259-residue chain is Transcription factor bHLH80 (259 aa).

A disordered region spans residues 1–25 (MQSTHISGGSSGGGGGGGGEVSRSG). Residues 9-20 (GSSGGGGGGGGE) show a composition bias toward gly residues. Residues 187-237 (CATHPRSIAERVRRTRISDRIRRLQELVPNMDKQTNTADMLEEAVEYVKAL) enclose the bHLH domain.

In terms of assembly, homodimer. As to expression, expressed constitutively in roots, leaves, stems, and flowers.

The protein resides in the nucleus. The protein is Transcription factor bHLH80 (BHLH80) of Arabidopsis thaliana (Mouse-ear cress).